The sequence spans 466 residues: 3-isopropylmalate dehydratase large subunit (466 aa).

Positions 347, 407, and 410 each coordinate [4Fe-4S] cluster.

This sequence belongs to the aconitase/IPM isomerase family. LeuC type 1 subfamily. As to quaternary structure, heterodimer of LeuC and LeuD. [4Fe-4S] cluster serves as cofactor.

It catalyses the reaction (2R,3S)-3-isopropylmalate = (2S)-2-isopropylmalate. It participates in amino-acid biosynthesis; L-leucine biosynthesis; L-leucine from 3-methyl-2-oxobutanoate: step 2/4. Functionally, catalyzes the isomerization between 2-isopropylmalate and 3-isopropylmalate, via the formation of 2-isopropylmaleate. The chain is 3-isopropylmalate dehydratase large subunit from Shewanella loihica (strain ATCC BAA-1088 / PV-4).